The primary structure comprises 475 residues: Protein trichome birefringence-like 6 (475 aa).

Residues 14 to 34 (VLAFIITIISSAIVFFTFFSS) form a helical; Signal-anchor for type II membrane protein membrane-spanning segment. The GDS motif signature appears at 211-213 (GDS). The DCXHWCLPGXXDXWN motif motif lies at 450-464 (DCSHWCLPGVPDTWN).

This sequence belongs to the PC-esterase family. TBL subfamily.

The protein resides in the membrane. Functionally, may act as a bridging protein that binds pectin and other cell wall polysaccharides. Probably involved in maintaining esterification of pectins. May be involved in the specific O-acetylation of cell wall polymers. This chain is Protein trichome birefringence-like 6 (TBL6), found in Arabidopsis thaliana (Mouse-ear cress).